The primary structure comprises 212 residues: Cytidylate kinase (212 aa).

7–15 (GPAASGKGT) is a binding site for ATP.

Belongs to the cytidylate kinase family. Type 1 subfamily.

The protein resides in the cytoplasm. It carries out the reaction CMP + ATP = CDP + ADP. It catalyses the reaction dCMP + ATP = dCDP + ADP. This is Cytidylate kinase from Rhodopseudomonas palustris (strain BisB5).